The sequence spans 354 residues: Uroporphyrinogen decarboxylase (354 aa).

Residues 28-32 (RQAGR), D78, Y155, S210, and H325 contribute to the substrate site.

This sequence belongs to the uroporphyrinogen decarboxylase family. Homodimer.

The protein localises to the cytoplasm. It catalyses the reaction uroporphyrinogen III + 4 H(+) = coproporphyrinogen III + 4 CO2. It participates in porphyrin-containing compound metabolism; protoporphyrin-IX biosynthesis; coproporphyrinogen-III from 5-aminolevulinate: step 4/4. In terms of biological role, catalyzes the decarboxylation of four acetate groups of uroporphyrinogen-III to yield coproporphyrinogen-III. The sequence is that of Uroporphyrinogen decarboxylase from Trichodesmium erythraeum (strain IMS101).